We begin with the raw amino-acid sequence, 395 residues long: Altered inheritance of mitochondria protein 39, mitochondrial (395 aa).

A helical transmembrane segment spans residues 156–176 (QIWSAIFGGIFGVILGYSLIY).

This sequence belongs to the AIM39 family.

It localises to the mitochondrion membrane. This Saccharomyces cerevisiae (strain RM11-1a) (Baker's yeast) protein is Altered inheritance of mitochondria protein 39, mitochondrial (AIM39).